The following is a 109-amino-acid chain: Cell division suppressor protein YneA (109 aa).

In terms of domain architecture, LysM spans 39–90; sequence SEVNVSEGDSLWALADQYAGKSDMAKADFVSWVEKENNLADGHVEAGDSVVI.

The protein belongs to the YneA family.

The protein resides in the cytoplasm. In terms of biological role, inhibits cell division during the SOS response. Affects a later stage of the cell division protein assembly, after the assembly of the Z ring, by probably suppressing recruitment of FtsL and/or DivIC to the division machinery. The polypeptide is Cell division suppressor protein YneA (Listeria monocytogenes serotype 4b (strain CLIP80459)).